The sequence spans 110 residues: MALWMRLLPLLALLALWGPDPAAAFVNQHLCGSHLVEALYLVCGERGFFYTPKTRREAEDLQVGQVELGGGPGAGSLQPLALEGSLQKRGIVEQCCTSICSLYQLENYCN.

The signal sequence occupies residues 1-24 (MALWMRLLPLLALLALWGPDPAAA). Intrachain disulfides connect cysteine 31–cysteine 96, cysteine 43–cysteine 109, and cysteine 95–cysteine 100. Residues 57–87 (EAEDLQVGQVELGGGPGAGSLQPLALEGSLQ) constitute a propeptide, c peptide.

The protein belongs to the insulin family. Heterodimer of a B chain and an A chain linked by two disulfide bonds.

The protein localises to the secreted. Insulin decreases blood glucose concentration. It increases cell permeability to monosaccharides, amino acids and fatty acids. It accelerates glycolysis, the pentose phosphate cycle, and glycogen synthesis in liver. The sequence is that of Insulin (INS) from Gorilla gorilla gorilla (Western lowland gorilla).